Reading from the N-terminus, the 609-residue chain is MSQESSYGKWTISSSDESEDEKPKPDKPSASSHPQAGQGVSKELIYTCSEARKVAHKRQISPVKFNDADSVLPHKKQKSDSPEGLGWCLSSSDDDQQPDVTQQEQPKRVLPQEKKHVSSPDVTTAQKVVDRSPPASLRPQRADDEYETSGEGQDIWDMLDKGNPFQFYLTRVSGIKAKYNSKALHIKDILSPLFGTLVSSAQFNYCFDVDWLIKQYPPEFRKNPILLVHGDKREAKADLHAQAKPYANISLCQAKLDIAFGTHHTKMMLLLYEEGLRVVIHTSNLIREDWHQKTQGIWLSPLYPRIDQGSHTAGESSTRFKADLTSYLTAYNAPPLQEWIDIIQEHDLSETNVYLIGSTPGRFQGSHRDNWGHFRLRKLLQAHAPSTPKGECWPIVGQFSSIGSLGPDESKWLCSEFKDSLLALREEGRPPGKSAVPLHLIYPSVENVRTSLEGYPAGGSLPYSIQTAEKQRWLHSYFHKWSAETSGRSNAMPHIKTYMRPSPDFSKLAWFLVTSANLSKAAWGALEKNGTQLMIRSYELGVLFLPSAFGLDTFKVKQKFFSSSCEPTASFPVPYDLPPELYRSKDRPWIWNIPYVKAPDTHGNMWVPS.

Residues 1-12 (MSQESSYGKWTI) show a composition bias toward polar residues. Residues 1–155 (MSQESSYGKW…YETSGEGQDI (155 aa)) form a disordered region. Position 61 is a phosphoserine (Ser61). Residues 105 to 118 (QPKRVLPQEKKHVS) are compositionally biased toward basic and acidic residues. Residues Ser119 and Ser132 each carry the phosphoserine modification. Thr148 bears the Phosphothreonine mark. Ser149 is modified (phosphoserine). His264 serves as the catalytic Nucleophile. Lys266 is a binding site for substrate. An interaction with DNA region spans residues 401–404 (SIGS). The active-site Proton donor/acceptor is His494. Substrate is bound at residue Lys496.

This sequence belongs to the tyrosyl-DNA phosphodiesterase family. Monomer. In terms of tissue distribution, ubiquitous.

The protein localises to the nucleus. The protein resides in the cytoplasm. In terms of biological role, DNA repair enzyme that can remove a variety of covalent adducts from DNA through hydrolysis of a 3'-phosphodiester bond, giving rise to DNA with a free 3' phosphate. Catalyzes the hydrolysis of dead-end complexes between DNA and the topoisomerase I active site tyrosine residue. Hydrolyzes 3'-phosphoglycolates on protruding 3' ends on DNA double-strand breaks due to DNA damage by radiation and free radicals. Acts on blunt-ended double-strand DNA breaks and on single-stranded DNA. Has low 3'exonuclease activity and can remove a single nucleoside from the 3'end of DNA and RNA molecules with 3'hydroxyl groups. Has no exonuclease activity towards DNA or RNA with a 3'phosphate. This is Tyrosyl-DNA phosphodiesterase 1 (Tdp1) from Mus musculus (Mouse).